Here is a 601-residue protein sequence, read N- to C-terminus: Elongation factor 4 (601 aa).

A tr-type G domain is found at 6 to 188; the sequence is EHIRNFSIIA…EIVRKIPAPE (183 aa). GTP is bound by residues 18–23 and 135–138; these read DHGKST and NKID.

It belongs to the TRAFAC class translation factor GTPase superfamily. Classic translation factor GTPase family. LepA subfamily.

It is found in the cell inner membrane. The enzyme catalyses GTP + H2O = GDP + phosphate + H(+). Required for accurate and efficient protein synthesis under certain stress conditions. May act as a fidelity factor of the translation reaction, by catalyzing a one-codon backward translocation of tRNAs on improperly translocated ribosomes. Back-translocation proceeds from a post-translocation (POST) complex to a pre-translocation (PRE) complex, thus giving elongation factor G a second chance to translocate the tRNAs correctly. Binds to ribosomes in a GTP-dependent manner. This chain is Elongation factor 4, found in Hydrogenovibrio crunogenus (strain DSM 25203 / XCL-2) (Thiomicrospira crunogena).